Here is a 362-residue protein sequence, read N- to C-terminus: Photosystem II protein D1 3 (362 aa).

A run of 3 helical transmembrane segments spans residues 29-46 (YVGW…SATI), 118-133 (HFLI…EWEL), and 142-156 (WICI…AATA). A chlorophyll a-binding site is contributed by His118. Tyr126 contributes to the pheophytin a binding site. The [CaMn4O5] cluster site is built by Asp170 and Glu189. Residues 197–218 (FHMLGVAGVFGGALISAMHGSL) traverse the membrane as a helical segment. His198 serves as a coordination point for chlorophyll a. A quinone-binding positions include His215 and 264-265 (AF). Position 215 (His215) interacts with Fe cation. His274 is a binding site for Fe cation. Residues 276-290 (IMAAFPVIGIWFTSL) traverse the membrane as a helical segment. The [CaMn4O5] cluster site is built by His334, Glu335, Asp344, and Ala346. A propeptide spanning residues 347–362 (GTESAPVAVSTAKVGG) is cleaved from the precursor.

This sequence belongs to the reaction center PufL/M/PsbA/D family. As to quaternary structure, PSII is composed of 1 copy each of membrane proteins PsbA, PsbB, PsbC, PsbD, PsbE, PsbF, PsbH, PsbI, PsbJ, PsbK, PsbL, PsbM, PsbT, PsbX, Psb30/Ycf12, peripheral proteins PsbO, CyanoQ (PsbQ), PsbU, PsbV and a large number of cofactors. It forms dimeric complexes. The cofactor is The D1/D2 heterodimer binds P680, chlorophylls that are the primary electron donor of PSII, and subsequent electron acceptors. It shares a non-heme iron and each subunit binds pheophytin, quinone, additional chlorophylls, carotenoids and lipids. D1 provides most of the ligands for the Mn4-Ca-O5 cluster of the oxygen-evolving complex (OEC). There is also a Cl(-1) ion associated with D1 and D2, which is required for oxygen evolution. The PSII complex binds additional chlorophylls, carotenoids and specific lipids.. Post-translationally, tyr-161 forms a radical intermediate that is referred to as redox-active TyrZ, YZ or Y-Z. In terms of processing, C-terminally processed by CtpA; processing is essential to allow assembly of the oxygen-evolving complex and thus photosynthetic growth.

It is found in the cell inner membrane. The enzyme catalyses 2 a plastoquinone + 4 hnu + 2 H2O = 2 a plastoquinol + O2. In terms of biological role, photosystem II (PSII) is a light-driven water:plastoquinone oxidoreductase that uses light energy to abstract electrons from H(2)O, generating O(2) and a proton gradient subsequently used for ATP formation. It consists of a core antenna complex that captures photons, and an electron transfer chain that converts photonic excitation into a charge separation. The D1/D2 (PsbA/PsbD) reaction center heterodimer binds P680, the primary electron donor of PSII as well as several subsequent electron acceptors. This is Photosystem II protein D1 3 from Gloeobacter violaceus (strain ATCC 29082 / PCC 7421).